The chain runs to 312 residues: Polyhedral envelope protein (312 aa).

The protein belongs to the baculoviridae PE family.

It is found in the virion membrane. Functionally, major component of the polyhedra envelope. The sequence is that of Polyhedral envelope protein from Lymantria dispar multicapsid nuclear polyhedrosis virus (LdMNPV).